The primary structure comprises 476 residues: Calcium/calmodulin-dependent protein kinase type 1G (476 aa).

The Protein kinase domain maps to 23–277 (FIFMEVLGSG…CEKALRHPWI (255 aa)). Residues 29–37 (LGSGAFSEV) and K52 contribute to the ATP site. D143 acts as the Proton acceptor in catalysis. An autoinhibitory domain region spans residues 277–317 (IDGNTALHRDIYPSVSLQIQKNFAKSKWRQAFNAAAVVHHM). Positions 297–318 (KNFAKSKWRQAFNAAAVVHHMR) are calmodulin-binding. The tract at residues 326–387 (SPSVRQEVEN…SSRPSAPGGR (62 aa)) is disordered.

It belongs to the protein kinase superfamily. CAMK Ser/Thr protein kinase family. CaMK subfamily. In terms of processing, prenylated on Cys-473.

It is found in the cytoplasm. It localises to the golgi apparatus membrane. Its subcellular location is the cell membrane. It catalyses the reaction L-seryl-[protein] + ATP = O-phospho-L-seryl-[protein] + ADP + H(+). The catalysed reaction is L-threonyl-[protein] + ATP = O-phospho-L-threonyl-[protein] + ADP + H(+). Its activity is regulated as follows. Activated by Ca(2+)/calmodulin. Binding of calmodulin is thought to result in a conformational change and leads to activation through phosphorylation by CAMKK1. Calcium/calmodulin-dependent protein kinase belonging to a proposed calcium-triggered signaling cascade. In vitro phosphorylates transcription factor CREB1. This is Calcium/calmodulin-dependent protein kinase type 1G (Camk1g) from Rattus norvegicus (Rat).